The following is a 200-amino-acid chain: Holliday junction branch migration complex subunit RuvA (200 aa).

The segment at 1–64 (MIGHLRGIIV…EDAHTLYGFH (64 aa)) is domain I. Positions 65 to 143 (NDHERRLFRA…RWHTNDTPSP (79 aa)) are domain II. A disordered region spans residues 133 to 152 (SRWHTNDTPSPEGLRSSNTQ). The flexible linker stretch occupies residues 144 to 148 (EGLRS). Residues 149 to 200 (SNTQPTQDAISALMALGYKPQEAKRAIDAIQKPDLSAETLIRLALKQMVLGT) are domain III.

This sequence belongs to the RuvA family. In terms of assembly, homotetramer. Forms an RuvA(8)-RuvB(12)-Holliday junction (HJ) complex. HJ DNA is sandwiched between 2 RuvA tetramers; dsDNA enters through RuvA and exits via RuvB. An RuvB hexamer assembles on each DNA strand where it exits the tetramer. Each RuvB hexamer is contacted by two RuvA subunits (via domain III) on 2 adjacent RuvB subunits; this complex drives branch migration. In the full resolvosome a probable DNA-RuvA(4)-RuvB(12)-RuvC(2) complex forms which resolves the HJ.

It localises to the cytoplasm. The RuvA-RuvB-RuvC complex processes Holliday junction (HJ) DNA during genetic recombination and DNA repair, while the RuvA-RuvB complex plays an important role in the rescue of blocked DNA replication forks via replication fork reversal (RFR). RuvA specifically binds to HJ cruciform DNA, conferring on it an open structure. The RuvB hexamer acts as an ATP-dependent pump, pulling dsDNA into and through the RuvAB complex. HJ branch migration allows RuvC to scan DNA until it finds its consensus sequence, where it cleaves and resolves the cruciform DNA. This is Holliday junction branch migration complex subunit RuvA from Coxiella burnetii (strain Dugway 5J108-111).